The primary structure comprises 428 residues: L-rhamnose isomerase (428 aa).

Residues His-260, Asp-292, and Asp-294 each coordinate Mn(2+).

This sequence belongs to the rhamnose isomerase family. The cofactor is Mn(2+).

Its subcellular location is the cytoplasm. The enzyme catalyses L-rhamnopyranose = L-rhamnulose. Its pathway is carbohydrate degradation; L-rhamnose degradation; glycerone phosphate from L-rhamnose: step 1/3. Catalyzes the interconversion of L-rhamnose and L-rhamnulose. This is L-rhamnose isomerase from Enterococcus faecalis (strain ATCC 700802 / V583).